Consider the following 347-residue polypeptide: Phospho-N-acetylmuramoyl-pentapeptide-transferase (347 aa).

10 helical membrane passes run 10 to 30 (SLVFFLLTVFALAFILGIFLG), 67 to 87 (AGGILFFIVLLLTIFFWLPLG), 91 to 111 (TWLFAFLIISWSSLGWYDDIV), 127 to 147 (FVLQLLISAVITTAVMYIYKG), 164 to 184 (LGHSVLGQVFYFILAVLAIVG), 195 to 215 (LDGLAAGTTCMCAFGLLVVAV), 220 to 240 (IPLATDIPVLLTALLGVSLAF), 250 to 270 (VFMGDTGSLLIGGVLGSCAVM), 275 to 295 (LLLILLGGVFVAEAGSVILQI), and 325 to 345 (VVKRFWTAGFFCMVFGIIAAL).

This sequence belongs to the glycosyltransferase 4 family. MraY subfamily. The cofactor is Mg(2+).

The protein localises to the cell inner membrane. It catalyses the reaction UDP-N-acetyl-alpha-D-muramoyl-L-alanyl-gamma-D-glutamyl-meso-2,6-diaminopimeloyl-D-alanyl-D-alanine + di-trans,octa-cis-undecaprenyl phosphate = di-trans,octa-cis-undecaprenyl diphospho-N-acetyl-alpha-D-muramoyl-L-alanyl-D-glutamyl-meso-2,6-diaminopimeloyl-D-alanyl-D-alanine + UMP. Its pathway is cell wall biogenesis; peptidoglycan biosynthesis. Functionally, catalyzes the initial step of the lipid cycle reactions in the biosynthesis of the cell wall peptidoglycan: transfers peptidoglycan precursor phospho-MurNAc-pentapeptide from UDP-MurNAc-pentapeptide onto the lipid carrier undecaprenyl phosphate, yielding undecaprenyl-pyrophosphoryl-MurNAc-pentapeptide, known as lipid I. The polypeptide is Phospho-N-acetylmuramoyl-pentapeptide-transferase (Chlamydia abortus (strain DSM 27085 / S26/3) (Chlamydophila abortus)).